A 363-amino-acid polypeptide reads, in one-letter code: UDP-3-O-acylglucosamine N-acyltransferase (363 aa).

H259 serves as the catalytic Proton acceptor.

The protein belongs to the transferase hexapeptide repeat family. LpxD subfamily. In terms of assembly, homotrimer.

The catalysed reaction is a UDP-3-O-[(3R)-3-hydroxyacyl]-alpha-D-glucosamine + a (3R)-hydroxyacyl-[ACP] = a UDP-2-N,3-O-bis[(3R)-3-hydroxyacyl]-alpha-D-glucosamine + holo-[ACP] + H(+). The protein operates within bacterial outer membrane biogenesis; LPS lipid A biosynthesis. Its function is as follows. Catalyzes the N-acylation of UDP-3-O-acylglucosamine using 3-hydroxyacyl-ACP as the acyl donor. Is involved in the biosynthesis of lipid A, a phosphorylated glycolipid that anchors the lipopolysaccharide to the outer membrane of the cell. The polypeptide is UDP-3-O-acylglucosamine N-acyltransferase (Ruegeria pomeroyi (strain ATCC 700808 / DSM 15171 / DSS-3) (Silicibacter pomeroyi)).